The following is a 737-amino-acid chain: Delta and Notch-like epidermal growth factor-related receptor (737 aa).

A signal peptide spans 1–34 (MQPRRAQAPGAQLLPALALLLLLLGAGPRGSSLA). At 35 to 640 (NPVPAAPLSA…LTNMPRHSLY (606 aa)) the chain is on the extracellular side. 2 EGF-like domains span residues 44 to 92 (APGP…ANCQ) and 94 to 133 (VADP…PNCE). An interaction with NOTCH1 region spans residues 44 to 133 (APGPCAAQPC…NEGYEGPNCE (90 aa)). Cystine bridges form between Cys-48-Cys-59, Cys-53-Cys-80, Cys-82-Cys-91, Cys-98-Cys-108, Cys-103-Cys-121, and Cys-123-Cys-132. N-linked (GlcNAc...) asparagine glycosylation occurs at Asn-223. EGF-like domains are found at residues 309–348 (PGES…TFCE), 349–390 (EYDA…ELCQ), 392–428 (KIDY…SACE), 430–466 (KVDP…PTCA), and 468–503 (LIDF…LYCE). 23 disulfides stabilise this stretch: Cys-319–Cys-336, Cys-338–Cys-347, Cys-353–Cys-364, Cys-358–Cys-378, Cys-380–Cys-389, Cys-396–Cys-407, Cys-401–Cys-416, Cys-418–Cys-427, Cys-434–Cys-445, Cys-439–Cys-454, Cys-456–Cys-465, Cys-472–Cys-482, Cys-477–Cys-491, Cys-493–Cys-502, Cys-509–Cys-520, Cys-514–Cys-529, Cys-531–Cys-540, Cys-547–Cys-558, Cys-552–Cys-567, Cys-569–Cys-578, Cys-585–Cys-596, Cys-590–Cys-605, and Cys-607–Cys-616. The EGF-like 8; calcium-binding domain maps to 505-541 (EYNECLSAPCLNAATCRDLVNGYECVCLAEYKGTHCE). An EGF-like 9 domain is found at 543 to 579 (YKDPCANVSCLNGATCDSDGLNGTCICAPGFTGEECD). Residues 546 to 568 (PCANVSCLNGATCDSDGLNGTCI) form the Follistatin-like domain. Asn-564 carries an N-linked (GlcNAc...) asparagine glycan. In terms of domain architecture, EGF-like 10; calcium-binding spans 581-617 (DINECDSNPCHHGGSCLDQPNGYNCHCPHGWVGANCE). The helical transmembrane segment at 641-661 (IIIGALCVAFILMLIILIVGI) threads the bilayer. The Cytoplasmic portion of the chain corresponds to 662 to 737 (CRISRIEYQG…LVTLIKTKDL (76 aa)). The interval 677-680 (YEEF) is interaction with AP1G1 and somatodendritic targeting. The residue at position 685 (Ser-685) is a Phosphoserine. A phosphotyrosine mark is found at Tyr-711 and Tyr-721. At Ser-722 the chain carries Phosphoserine.

As to quaternary structure, interacts with AP1G1. Interacts with NOTCH1. In terms of tissue distribution, expressed in brain, spinal cord and adrenal gland.

It localises to the cell membrane. Activator of the NOTCH1 pathway. May mediate neuron-glia interaction during astrocytogenesis. This is Delta and Notch-like epidermal growth factor-related receptor (DNER) from Homo sapiens (Human).